A 683-amino-acid chain; its full sequence is Dipeptidyl-peptidase 5 (683 aa).

The N-terminal stretch at Met1 to Ala19 is a signal peptide. Residues Asn53, Asn69, Asn103, Asn116, Asn126, and Asn400 are each glycosylated (N-linked (GlcNAc...) asparagine). Residues Ser535, Asp617, and His649 each act as charge relay system in the active site.

It belongs to the peptidase S9C family.

It is found in the secreted. The protein resides in the cytoplasm. It localises to the nucleus. This Schizosaccharomyces pombe (strain 972 / ATCC 24843) (Fission yeast) protein is Dipeptidyl-peptidase 5.